A 247-amino-acid polypeptide reads, in one-letter code: Ribonuclease PH (247 aa).

Residues Arg96 and 134–136 (GTR) each bind phosphate.

Belongs to the RNase PH family. In terms of assembly, homohexameric ring arranged as a trimer of dimers.

It carries out the reaction tRNA(n+1) + phosphate = tRNA(n) + a ribonucleoside 5'-diphosphate. Phosphorolytic 3'-5' exoribonuclease that plays an important role in tRNA 3'-end maturation. Removes nucleotide residues following the 3'-CCA terminus of tRNAs; can also add nucleotides to the ends of RNA molecules by using nucleoside diphosphates as substrates, but this may not be physiologically important. Probably plays a role in initiation of 16S rRNA degradation (leading to ribosome degradation) during starvation. The protein is Ribonuclease PH of Tropheryma whipplei (strain TW08/27) (Whipple's bacillus).